A 292-amino-acid polypeptide reads, in one-letter code: Glutathione S-transferase L2, chloroplastic (292 aa).

The transit peptide at 1 to 56 (MSVGLKVSAFLHPTLALSSRDVSLSSSSSSLYLDRKILRPGSGRRWCKSRRTEPIL) directs the protein to the chloroplast. The GST N-terminal domain maps to 79 to 160 (GSTRLYISYT…YIDTNFEGPS (82 aa)). Residues 89–90 (CP), 117–118 (NR), 131–132 (KV), and 144–145 (ES) contribute to the glutathione site. Residues 130 to 286 (NKVPALEHNN…ELVERYKRRV (157 aa)) form the GST C-terminal domain.

It belongs to the GST superfamily. Lambda family.

It is found in the plastid. Its subcellular location is the chloroplast. The catalysed reaction is RX + glutathione = an S-substituted glutathione + a halide anion + H(+). Its function is as follows. Catalyzes the glutathione-dependent reduction of S-glutathionylquercetin to quercetin. In vitro, possesses glutathione-dependent thiol transferase activity toward 2-hydroxyethyl disulfide (HED). This chain is Glutathione S-transferase L2, chloroplastic (GSTL2), found in Arabidopsis thaliana (Mouse-ear cress).